A 463-amino-acid polypeptide reads, in one-letter code: Mitochondrial dynamics protein MID51 (463 aa).

The Mitochondrial intermembrane segment spans residues 1–23 (MAGAGERKGKKDDNGIGTAIDFV). A helical transmembrane segment spans residues 24–46 (LSNARLVLGVGGAAMLGIATLAV). The Cytoplasmic portion of the chain corresponds to 47-463 (KRMYDRAISA…LSEPEVLLQT (417 aa)). Residues 49–195 (MYDRAISAPT…LSGSLYDDLQ (147 aa)) are dimerization. A phosphoserine mark is found at S55, S59, S79, and S94. The interval 57–77 (PTSPTRLSHSGKRSWEEPNWM) is disordered. The interval 160 to 169 (AAVDICAELR) is important for interaction with DNM1L. ADP contacts are provided by S187, S189, and H201. The interval 234–243 (RRENPEYFPR) is important for interaction with DNM1L. The ADP site is built by S340, R342, and K368.

This sequence belongs to the MID49/MID51 family. In terms of assembly, homodimer. Interacts with DNM1L.

The protein resides in the mitochondrion outer membrane. Functionally, mitochondrial outer membrane protein which regulates mitochondrial fission/fusion dynamics. Promotes the recruitment and association of the fission mediator dynamin-related protein 1 (DNM1L) to the mitochondrial surface independently of the mitochondrial fission FIS1 and MFF proteins. Regulates DNM1L GTPase activity and DNM1L oligomerization. Binds ADP and can also bind GDP, although with lower affinity. Does not bind CDP, UDP, ATP, AMP or GTP. Inhibits DNM1L GTPase activity in the absence of bound ADP. Requires ADP to stimulate DNM1L GTPase activity and the assembly of DNM1L into long, oligomeric tubules with a spiral pattern, as opposed to the ring-like DNM1L oligomers observed in the absence of bound ADP. Does not require ADP for its function in recruiting DNM1L. The polypeptide is Mitochondrial dynamics protein MID51 (Mief1) (Mus musculus (Mouse)).